Reading from the N-terminus, the 305-residue chain is uncharacterized protein (305 aa).

Residues Ala267–Ala287 form a disordered region.

It belongs to the DnaB/DnaD family.

This is an uncharacterized protein from Listeria innocua serovar 6a (strain ATCC BAA-680 / CLIP 11262).